Consider the following 213-residue polypeptide: Phosphoribosylformylglycinamidine synthase subunit PurQ (213 aa).

Residues 5-213 (ACVVVYPGSN…FQSILNYLKR (209 aa)) enclose the Glutamine amidotransferase type-1 domain. Residue Cys86 is the Nucleophile of the active site. Active-site residues include His186 and Glu188.

As to quaternary structure, part of the FGAM synthase complex composed of 1 PurL, 1 PurQ and 2 PurS subunits.

The protein resides in the cytoplasm. It catalyses the reaction N(2)-formyl-N(1)-(5-phospho-beta-D-ribosyl)glycinamide + L-glutamine + ATP + H2O = 2-formamido-N(1)-(5-O-phospho-beta-D-ribosyl)acetamidine + L-glutamate + ADP + phosphate + H(+). The enzyme catalyses L-glutamine + H2O = L-glutamate + NH4(+). The protein operates within purine metabolism; IMP biosynthesis via de novo pathway; 5-amino-1-(5-phospho-D-ribosyl)imidazole from N(2)-formyl-N(1)-(5-phospho-D-ribosyl)glycinamide: step 1/2. In terms of biological role, part of the phosphoribosylformylglycinamidine synthase complex involved in the purines biosynthetic pathway. Catalyzes the ATP-dependent conversion of formylglycinamide ribonucleotide (FGAR) and glutamine to yield formylglycinamidine ribonucleotide (FGAM) and glutamate. The FGAM synthase complex is composed of three subunits. PurQ produces an ammonia molecule by converting glutamine to glutamate. PurL transfers the ammonia molecule to FGAR to form FGAM in an ATP-dependent manner. PurS interacts with PurQ and PurL and is thought to assist in the transfer of the ammonia molecule from PurQ to PurL. This chain is Phosphoribosylformylglycinamidine synthase subunit PurQ, found in Thermotoga maritima (strain ATCC 43589 / DSM 3109 / JCM 10099 / NBRC 100826 / MSB8).